A 294-amino-acid polypeptide reads, in one-letter code: 2,2',3-trihydroxybiphenyl dioxygenase (294 aa).

2 consecutive VOC domains span residues 7 to 120 (GYLI…LYVE) and 144 to 264 (GLGH…LGFG). Fe cation contacts are provided by histidine 147, histidine 209, and glutamate 260.

Belongs to the extradiol ring-cleavage dioxygenase family. As to quaternary structure, monomer. Requires Fe(2+) as cofactor.

It functions in the pathway xenobiotic degradation; dibenzo-p-dioxin degradation; 2-hydroxymuconate and catechol from dibenzo-p-dioxin: step 2/3. Its pathway is xenobiotic degradation; dibenzofuran degradation; 2-hydroxy-2,4-pentadienoate and salicylate from dibenzofuran: step 2/3. Responsible for meta-cleavage of the first aromatic ring of 2,2',3-trihydroxybiphenyl and 2,3-dihydroxybiphenyl. 2,2',3-trihydroxydiphenyl ether, catechol, 3-methylcatechol, and 4-methylcatechol are oxidized less efficiently and 3,4-dihydroxybiphenyl is oxidized considerably less efficiently. This chain is 2,2',3-trihydroxybiphenyl dioxygenase (dbfB), found in Sphingomonas paucimobilis (Pseudomonas paucimobilis).